A 600-amino-acid chain; its full sequence is CTP synthase (600 aa).

Residues 304-570 (TIVLVGKYTH…IQSGEEVEWS (267 aa)) enclose the Glutamine amidotransferase type-1 domain. Active-site for GATase activity residues include cysteine 403, histidine 532, and glutamate 534.

Belongs to the CTP synthase family.

The enzyme catalyses UTP + L-glutamine + ATP + H2O = CTP + L-glutamate + ADP + phosphate + 2 H(+). Its pathway is pyrimidine metabolism; CTP biosynthesis via de novo pathway; CTP from UDP: step 2/2. Catalyzes the ATP-dependent amination of UTP to CTP with either L-glutamine or ammonia as the source of nitrogen. This chain is CTP synthase (ura7), found in Schizosaccharomyces pombe (strain 972 / ATCC 24843) (Fission yeast).